The primary structure comprises 249 residues: Basic leucine zipper 23 (249 aa).

The interval 66-90 (KVSTDDTSESSGKKRPLGNREAVRK) is disordered. Positions 74 to 121 (ESSGKKRPLGNREAVRKYREKKKAKAASLEDEVMRLKAVNNQLLKRLQ) constitute a bZIP domain. Residues 78–98 (KKRPLGNREAVRKYREKKKAK) are basic motif. The leucine-zipper stretch occupies residues 102-116 (LEDEVMRLKAVNNQL).

Its subcellular location is the nucleus. Its function is as follows. Transcription factor involved in the response to zinc ion deficiency. Binds to the consensus sequence 5'-[AG]TGTCGACA[CT]-3' also called zinc deficiency response element (ZDRE). The ZDRE sequence is conserved in the plant kingdom and present in the promoters of genes that constitute the primary response to zinc deficiency, comprising additional ZIP metal transporter genes. Required for zinc accumulation in roots. Mediates the expression of the zinc transporter ZIP12 during growth in zinc-deficient conditions. ZIP12 transporter is involved in zinc uptake in roots. The chain is Basic leucine zipper 23 from Arabidopsis thaliana (Mouse-ear cress).